Reading from the N-terminus, the 170-residue chain is UPF0316 protein CLJ_B0679 (170 aa).

A run of 2 helical transmembrane segments spans residues 1-21 (MLSY…LMTI) and 36-56 (IIGF…LSGI).

It belongs to the UPF0316 family.

It is found in the cell membrane. The polypeptide is UPF0316 protein CLJ_B0679 (Clostridium botulinum (strain 657 / Type Ba4)).